The sequence spans 52 residues: Large ribosomal subunit protein eL40 (52 aa).

Residues cysteine 20, cysteine 23, cysteine 34, and cysteine 39 each coordinate Zn(2+).

The protein belongs to the eukaryotic ribosomal protein eL40 family. Component of the large ribosomal subunit. Mature ribosomes consist of a small (40S) and a large (60S) subunit. The 40S subunit contains about 32 different proteins and 1 molecule of RNA (18S). The 60S subunit contains 45 different proteins and 3 molecules of RNA (25S, 5.8S and 5S). It depends on Zn(2+) as a cofactor.

It localises to the cytoplasm. Functionally, component of the ribosome, a large ribonucleoprotein complex responsible for the synthesis of proteins in the cell. The small ribosomal subunit (SSU) binds messenger RNAs (mRNAs) and translates the encoded message by selecting cognate aminoacyl-transfer RNA (tRNA) molecules. The large subunit (LSU) contains the ribosomal catalytic site termed the peptidyl transferase center (PTC), which catalyzes the formation of peptide bonds, thereby polymerizing the amino acids delivered by tRNAs into a polypeptide chain. The nascent polypeptides leave the ribosome through a tunnel in the LSU and interact with protein factors that function in enzymatic processing, targeting, and the membrane insertion of nascent chains at the exit of the ribosomal tunnel. This Candida albicans (strain SC5314 / ATCC MYA-2876) (Yeast) protein is Large ribosomal subunit protein eL40.